Here is a 273-residue protein sequence, read N- to C-terminus: Urease accessory protein UreD (273 aa).

This sequence belongs to the UreD family. As to quaternary structure, ureD, UreF and UreG form a complex that acts as a GTP-hydrolysis-dependent molecular chaperone, activating the urease apoprotein by helping to assemble the nickel containing metallocenter of UreC. The UreE protein probably delivers the nickel.

The protein resides in the cytoplasm. Functionally, required for maturation of urease via the functional incorporation of the urease nickel metallocenter. This chain is Urease accessory protein UreD, found in Rhizobium leguminosarum bv. viciae.